Here is a 226-residue protein sequence, read N- to C-terminus: DNA mismatch repair protein MutH (226 aa).

Belongs to the MutH family.

Its subcellular location is the cytoplasm. Functionally, sequence-specific endonuclease that cleaves unmethylated GATC sequences. It is involved in DNA mismatch repair. This Vibrio parahaemolyticus serotype O3:K6 (strain RIMD 2210633) protein is DNA mismatch repair protein MutH.